The chain runs to 151 residues: uncharacterized protein (151 aa).

4Fe-4S ferredoxin-type domains lie at 4–32 (KIIVLNPEKCTKCYDCINICKEIHGESRV), 33–63 (RKVDGIPIFCMQCENAPCKEICPVDAIYLKD), and 64–93 (GIPIVDKERCIACGMCAIACPIGAIFIKNR). [4Fe-4S] cluster-binding residues include C13, C16, C19, C23, C42, C45, C50, C54, C73, C76, C79, C83, C98, C101, C111, and C115.

It depends on [4Fe-4S] cluster as a cofactor.

This is an uncharacterized protein from Methanocaldococcus jannaschii (strain ATCC 43067 / DSM 2661 / JAL-1 / JCM 10045 / NBRC 100440) (Methanococcus jannaschii).